The chain runs to 381 residues: Arf-GAP with dual PH domain-containing protein 2 (381 aa).

The region spanning 9–132 (KRLLELLQAA…TAIDKAVSHP (124 aa)) is the Arf-GAP domain. The C4-type zinc finger occupies 25-48 (CADCGAADPDWASYKLGIFICLHC). PH domains lie at 132-233 (PGNR…AARL) and 255-361 (NYLK…GVLS).

The protein resides in the cytoplasm. It localises to the cell membrane. GTPase-activating protein for the ADP ribosylation factor family (Potential). Binds phosphatidylinositol 3,4,5-trisphosphate (PtdInsP3) and inositol 1,3,4,5-tetrakisphosphate (InsP4). Possesses a stoichiometry of two binding sites for InsP4 with identical affinity. This is Arf-GAP with dual PH domain-containing protein 2 (Adap2) from Mus musculus (Mouse).